A 240-amino-acid polypeptide reads, in one-letter code: UDP-2,3-diacylglucosamine hydrolase (240 aa).

Residues D8, H10, D41, N78, and H113 each coordinate Mn(2+). A substrate-binding site is contributed by 78–79 (NR). Residues D121, S159, N163, K166, and H194 each contribute to the substrate site. H194 and H196 together coordinate Mn(2+).

The protein belongs to the LpxH family. Mn(2+) is required as a cofactor.

Its subcellular location is the cell inner membrane. The enzyme catalyses UDP-2-N,3-O-bis[(3R)-3-hydroxytetradecanoyl]-alpha-D-glucosamine + H2O = 2-N,3-O-bis[(3R)-3-hydroxytetradecanoyl]-alpha-D-glucosaminyl 1-phosphate + UMP + 2 H(+). The protein operates within glycolipid biosynthesis; lipid IV(A) biosynthesis; lipid IV(A) from (3R)-3-hydroxytetradecanoyl-[acyl-carrier-protein] and UDP-N-acetyl-alpha-D-glucosamine: step 4/6. Functionally, hydrolyzes the pyrophosphate bond of UDP-2,3-diacylglucosamine to yield 2,3-diacylglucosamine 1-phosphate (lipid X) and UMP by catalyzing the attack of water at the alpha-P atom. Involved in the biosynthesis of lipid A, a phosphorylated glycolipid that anchors the lipopolysaccharide to the outer membrane of the cell. This chain is UDP-2,3-diacylglucosamine hydrolase, found in Shewanella baltica (strain OS155 / ATCC BAA-1091).